The chain runs to 94 residues: Co-chaperonin GroES (94 aa).

The protein belongs to the GroES chaperonin family. As to quaternary structure, heptamer of 7 subunits arranged in a ring. Interacts with the chaperonin GroEL.

The protein resides in the cytoplasm. Its function is as follows. Together with the chaperonin GroEL, plays an essential role in assisting protein folding. The GroEL-GroES system forms a nano-cage that allows encapsulation of the non-native substrate proteins and provides a physical environment optimized to promote and accelerate protein folding. GroES binds to the apical surface of the GroEL ring, thereby capping the opening of the GroEL channel. The sequence is that of Co-chaperonin GroES from Clostridium botulinum.